The chain runs to 165 residues: Large ribosomal subunit protein uL10 (165 aa).

It belongs to the universal ribosomal protein uL10 family. Part of the ribosomal stalk of the 50S ribosomal subunit. The N-terminus interacts with L11 and the large rRNA to form the base of the stalk. The C-terminus forms an elongated spine to which L12 dimers bind in a sequential fashion forming a multimeric L10(L12)X complex.

Forms part of the ribosomal stalk, playing a central role in the interaction of the ribosome with GTP-bound translation factors. The chain is Large ribosomal subunit protein uL10 from Salmonella agona (strain SL483).